The following is a 117-amino-acid chain: UPF0344 protein GTNG_0604 (117 aa).

The next 4 membrane-spanning stretches (helical) occupy residues 1 to 21 (MTHAHITSWFIMIILFLIAVS), 39 to 59 (LFYIITIITGLLLLHSIASIS), 61 to 81 (LYWLKALAGLWVIGAMEMVLV), and 97 to 117 (VIALVVTLFLGLLLPLGFDLF).

The protein belongs to the UPF0344 family.

The protein resides in the cell membrane. This Geobacillus thermodenitrificans (strain NG80-2) protein is UPF0344 protein GTNG_0604.